A 487-amino-acid polypeptide reads, in one-letter code: V-type proton ATPase subunit B2 (487 aa).

The residue at position 2 (Gly-2) is an N-acetylglycine.

It belongs to the ATPase alpha/beta chains family. V-ATPase is a heteromultimeric enzyme composed of a peripheral catalytic V1 complex (components A to H) attached to an integral membrane V0 proton pore complex (components: a, c, c'', d and e).

It is found in the vacuole membrane. In terms of biological role, non-catalytic subunit of the peripheral V1 complex of vacuolar ATPase. V-ATPase is responsible for acidifying a variety of intracellular compartments in eukaryotic cells. In Arabidopsis thaliana (Mouse-ear cress), this protein is V-type proton ATPase subunit B2 (VHA-B2).